The chain runs to 291 residues: Oxidative stress-responsive serine-rich protein 1 (291 aa).

Residues 29–139 (ISLSVGEGPS…NAGENSTSLD (111 aa)) are disordered. Residues 65–83 (STRKSSRGAVRTQRRRRSK) show a composition bias toward basic residues. Over residues 95–105 (CSTTAPPSSSQ) the composition is skewed to polar residues. Thr-143 bears the Phosphothreonine mark.

This is Oxidative stress-responsive serine-rich protein 1 (Oser1) from Mus musculus (Mouse).